A 181-amino-acid chain; its full sequence is Peptidyl-tRNA hydrolase (181 aa).

Tyr-14 contacts tRNA. The active-site Proton acceptor is the His-19. Positions 62, 64, and 108 each coordinate tRNA.

This sequence belongs to the PTH family. Monomer.

The protein localises to the cytoplasm. The catalysed reaction is an N-acyl-L-alpha-aminoacyl-tRNA + H2O = an N-acyl-L-amino acid + a tRNA + H(+). Its function is as follows. Hydrolyzes ribosome-free peptidyl-tRNAs (with 1 or more amino acids incorporated), which drop off the ribosome during protein synthesis, or as a result of ribosome stalling. In terms of biological role, catalyzes the release of premature peptidyl moieties from peptidyl-tRNA molecules trapped in stalled 50S ribosomal subunits, and thus maintains levels of free tRNAs and 50S ribosomes. The chain is Peptidyl-tRNA hydrolase from Campylobacter jejuni subsp. jejuni serotype O:23/36 (strain 81-176).